A 345-amino-acid polypeptide reads, in one-letter code: Nuclear distribution protein nudE-like 1-A (345 aa).

Residues 19 to 190 are a coiled coil; the sequence is WRELSKRLKQ…LAVRERQTDG (172 aa). Residues 182-192 show a composition bias toward basic and acidic residues; the sequence is AVRERQTDGTR. 2 disordered regions span residues 182–206 and 326–345; these read AVRE…CDKT and PPGV…PLSV. Residues 334–345 show a composition bias toward pro residues; the sequence is PPSPPGMLPLSV.

The protein belongs to the nudE family. Phosphorylated in mitosis.

Its subcellular location is the cytoplasm. It is found in the cytoskeleton. It localises to the microtubule organizing center. The protein localises to the centrosome. The protein resides in the spindle. Functionally, required for organization of the cellular microtubule array and microtubule anchoring at the centrosome. Positively regulates the activity of the minus-end directed microtubule motor protein dynein. May enhance dynein-mediated microtubule sliding by targeting dynein to the microtubule plus end. Positively regulates lysosome peripheral distribution and ruffled border formation in osteoclasts. The polypeptide is Nuclear distribution protein nudE-like 1-A (ndel1-a) (Xenopus laevis (African clawed frog)).